The primary structure comprises 138 residues: ATP synthase epsilon chain (138 aa).

It belongs to the ATPase epsilon chain family. F-type ATPases have 2 components, CF(1) - the catalytic core - and CF(0) - the membrane proton channel. CF(1) has five subunits: alpha(3), beta(3), gamma(1), delta(1), epsilon(1). CF(0) has three main subunits: a, b and c.

It is found in the cell inner membrane. Produces ATP from ADP in the presence of a proton gradient across the membrane. This Methylibium petroleiphilum (strain ATCC BAA-1232 / LMG 22953 / PM1) protein is ATP synthase epsilon chain.